We begin with the raw amino-acid sequence, 361 residues long: MENIHIQTKSKEYDVHVGREALSHLTTLIQKMNPAVSNIMIISDEAVASLHLQTAVDALQVEQKVFSFVVPSGEKEKSFENFYEAHTSALENKLDRNSLIIALGGGMIGDLAGFVAASFMRGIRFVQVPTTLLAHDSAVGGKVAINHPLGKNMIGAFHQPEAVVYHTPFLHSLPEKEWRSGYAEVIKHALIGDVELYHWLKEEVQTLTDLRDEKLIHILTKAIPVKANIVSQDETEKGIRAHLNFGHTLGHALEKELGYGNITHGDGVAVGMLFAMFLSEQVYKVDLSYEEMKQWFLKYGYPKMPSDLNVERLVQLMKQDKKANAGTIHMVLMQEYGGVNVVSISDETVHIALEAFQKDMV.

NAD(+) is bound by residues 72 to 77, 130 to 131, K142, and K151; these read SGEKEK and TT. Zn(2+)-binding residues include E184, H247, and H264.

Belongs to the sugar phosphate cyclases superfamily. Dehydroquinate synthase family. Co(2+) is required as a cofactor. The cofactor is Zn(2+). Requires NAD(+) as cofactor.

The protein localises to the cytoplasm. It carries out the reaction 7-phospho-2-dehydro-3-deoxy-D-arabino-heptonate = 3-dehydroquinate + phosphate. The protein operates within metabolic intermediate biosynthesis; chorismate biosynthesis; chorismate from D-erythrose 4-phosphate and phosphoenolpyruvate: step 2/7. Catalyzes the conversion of 3-deoxy-D-arabino-heptulosonate 7-phosphate (DAHP) to dehydroquinate (DHQ). The protein is 3-dehydroquinate synthase of Bacillus mycoides (strain KBAB4) (Bacillus weihenstephanensis).